Reading from the N-terminus, the 126-residue chain is Aspartate 1-decarboxylase (126 aa).

S25 serves as the catalytic Schiff-base intermediate with substrate; via pyruvic acid. The residue at position 25 (S25) is a Pyruvic acid (Ser). T57 contacts substrate. Residue Y58 is the Proton donor of the active site. Residue 72 to 74 (GAA) coordinates substrate.

The protein belongs to the PanD family. Heterooctamer of four alpha and four beta subunits. Pyruvate is required as a cofactor. Is synthesized initially as an inactive proenzyme, which is activated by self-cleavage at a specific serine bond to produce a beta-subunit with a hydroxyl group at its C-terminus and an alpha-subunit with a pyruvoyl group at its N-terminus.

It localises to the cytoplasm. It carries out the reaction L-aspartate + H(+) = beta-alanine + CO2. It functions in the pathway cofactor biosynthesis; (R)-pantothenate biosynthesis; beta-alanine from L-aspartate: step 1/1. Functionally, catalyzes the pyruvoyl-dependent decarboxylation of aspartate to produce beta-alanine. The chain is Aspartate 1-decarboxylase from Campylobacter jejuni subsp. jejuni serotype O:23/36 (strain 81-176).